A 359-amino-acid chain; its full sequence is Chorismate synthase (359 aa).

Residue Arg-47 coordinates NADP(+). FMN contacts are provided by residues 123-125, Gly-283, 298-302, and Arg-326; these read RSS and KPTSS.

Belongs to the chorismate synthase family. In terms of assembly, homotetramer. Requires FMNH2 as cofactor.

The enzyme catalyses 5-O-(1-carboxyvinyl)-3-phosphoshikimate = chorismate + phosphate. It functions in the pathway metabolic intermediate biosynthesis; chorismate biosynthesis; chorismate from D-erythrose 4-phosphate and phosphoenolpyruvate: step 7/7. Its function is as follows. Catalyzes the anti-1,4-elimination of the C-3 phosphate and the C-6 proR hydrogen from 5-enolpyruvylshikimate-3-phosphate (EPSP) to yield chorismate, which is the branch point compound that serves as the starting substrate for the three terminal pathways of aromatic amino acid biosynthesis. This reaction introduces a second double bond into the aromatic ring system. The protein is Chorismate synthase of Chlamydia felis (strain Fe/C-56) (Chlamydophila felis).